The primary structure comprises 173 residues: Shikimate kinase 2 (173 aa).

Residue 12 to 17 coordinates ATP; the sequence is GCGKTT. Mg(2+) contacts are provided by Thr-16 and Asp-32. The substrate site is built by Asp-34, Arg-58, and Gly-79. Residues 112–126 are LID domain; the sequence is QASPQAHQRPTLTGR. An ATP-binding site is contributed by Arg-120. Position 139 (Arg-139) interacts with substrate. Residue Gln-155 coordinates ATP.

In terms of assembly, monomer. It depends on Mg(2+) as a cofactor.

It is found in the cytoplasm. The catalysed reaction is shikimate + ATP = 3-phosphoshikimate + ADP + H(+). Its pathway is metabolic intermediate biosynthesis; chorismate biosynthesis; chorismate from D-erythrose 4-phosphate and phosphoenolpyruvate: step 5/7. Its activity is regulated as follows. Inhibited by chloride and sulfate ions. Functionally, catalyzes the specific phosphorylation of the 3-hydroxyl group of shikimic acid using ATP as a cosubstrate. The chain is Shikimate kinase 2 (aroL) from Dickeya chrysanthemi (Pectobacterium chrysanthemi).